The primary structure comprises 257 residues: Ribonuclease HII (257 aa).

The region spanning 72–257 (TYIAGIDEVG…FAPIKDMIQK (186 aa)) is the RNase H type-2 domain. A divalent metal cation is bound by residues D78, E79, and D170.

It belongs to the RNase HII family. Mn(2+) is required as a cofactor. The cofactor is Mg(2+).

It is found in the cytoplasm. The enzyme catalyses Endonucleolytic cleavage to 5'-phosphomonoester.. Endonuclease that specifically degrades the RNA of RNA-DNA hybrids. This Bacillus cereus (strain ZK / E33L) protein is Ribonuclease HII.